A 147-amino-acid polypeptide reads, in one-letter code: MAKLLVLHGPNLNLLGTREPEVYGHTTLADIDQALASQASAAGHAVESLQSNAEHVLVDRVQAARDDGTAFILINPAAFTHTSVALRDALAAVAVPFIEIHLSNPHTREPFRQHSYFSDKAVGVVCGFGADSYRYAMDAALLRVSAT.

Tyr23 acts as the Proton acceptor in catalysis. Substrate is bound by residues Asn75, His81, and Asp88. Residue His101 is the Proton donor of the active site. Substrate contacts are provided by residues 102 to 103 and Arg112; that span reads LS.

The protein belongs to the type-II 3-dehydroquinase family. Homododecamer.

The enzyme catalyses 3-dehydroquinate = 3-dehydroshikimate + H2O. It functions in the pathway metabolic intermediate biosynthesis; chorismate biosynthesis; chorismate from D-erythrose 4-phosphate and phosphoenolpyruvate: step 3/7. Catalyzes a trans-dehydration via an enolate intermediate. The protein is 3-dehydroquinate dehydratase of Stenotrophomonas maltophilia (strain K279a).